Consider the following 218-residue polypeptide: Probable GTP-binding protein EngB (218 aa).

The 175-residue stretch at 31 to 205 folds into the EngB-type G domain; the sequence is VGVEIAFAGR…LGILNEWCHP (175 aa). GTP-binding positions include 39-46, 66-70, 84-87, 151-154, and 184-186; these read GRSNAGKS, GRTQL, DLPG, TKCD, and FSS. Residues Ser46 and Thr68 each coordinate Mg(2+).

Belongs to the TRAFAC class TrmE-Era-EngA-EngB-Septin-like GTPase superfamily. EngB GTPase family. It depends on Mg(2+) as a cofactor.

Functionally, necessary for normal cell division and for the maintenance of normal septation. This is Probable GTP-binding protein EngB from Shewanella loihica (strain ATCC BAA-1088 / PV-4).